The following is a 58-amino-acid chain: Keratin-associated protein 19-6 (58 aa).

This sequence belongs to the KRTAP type 19 family. As to quaternary structure, interacts with hair keratins.

In terms of biological role, in the hair cortex, hair keratin intermediate filaments are embedded in an interfilamentous matrix, consisting of hair keratin-associated proteins (KRTAP), which are essential for the formation of a rigid and resistant hair shaft through their extensive disulfide bond cross-linking with abundant cysteine residues of hair keratins. The matrix proteins include the high-sulfur and high-glycine-tyrosine keratins. This is Keratin-associated protein 19-6 (KRTAP19-6) from Homo sapiens (Human).